The following is a 117-amino-acid chain: Large ribosomal subunit protein uL18 (117 aa).

Belongs to the universal ribosomal protein uL18 family. In terms of assembly, part of the 50S ribosomal subunit; part of the 5S rRNA/L5/L18/L25 subcomplex. Contacts the 5S and 23S rRNAs.

This is one of the proteins that bind and probably mediate the attachment of the 5S RNA into the large ribosomal subunit, where it forms part of the central protuberance. This is Large ribosomal subunit protein uL18 from Hydrogenovibrio crunogenus (strain DSM 25203 / XCL-2) (Thiomicrospira crunogena).